The chain runs to 159 residues: Probable cyclic pyranopterin monophosphate synthase (159 aa).

Substrate is bound by residues 75-77 (LCH) and 111-112 (ME). The active site involves D126.

It belongs to the MoaC family. As to quaternary structure, homohexamer; trimer of dimers.

The enzyme catalyses (8S)-3',8-cyclo-7,8-dihydroguanosine 5'-triphosphate = cyclic pyranopterin phosphate + diphosphate. It participates in cofactor biosynthesis; molybdopterin biosynthesis. Its function is as follows. Catalyzes the conversion of (8S)-3',8-cyclo-7,8-dihydroguanosine 5'-triphosphate to cyclic pyranopterin monophosphate (cPMP). In Pyrococcus abyssi (strain GE5 / Orsay), this protein is Probable cyclic pyranopterin monophosphate synthase.